The chain runs to 324 residues: N-acetyl-gamma-glutamyl-phosphate reductase (324 aa).

Cys131 is a catalytic residue.

The protein belongs to the NAGSA dehydrogenase family. Type 1 subfamily.

The protein resides in the cytoplasm. The enzyme catalyses N-acetyl-L-glutamate 5-semialdehyde + phosphate + NADP(+) = N-acetyl-L-glutamyl 5-phosphate + NADPH + H(+). It functions in the pathway amino-acid biosynthesis; L-arginine biosynthesis; N(2)-acetyl-L-ornithine from L-glutamate: step 3/4. In terms of biological role, catalyzes the NADPH-dependent reduction of N-acetyl-5-glutamyl phosphate to yield N-acetyl-L-glutamate 5-semialdehyde. The sequence is that of N-acetyl-gamma-glutamyl-phosphate reductase from Bradyrhizobium sp. (strain BTAi1 / ATCC BAA-1182).